The following is a 144-amino-acid chain: Ribosome-binding factor A (144 aa).

Disordered stretches follow at residues 1–22 and 125–144; these read MPRH…QLRV and TPAV…EEEQ. Acidic residues predominate over residues 134–144; sequence QDPDSDREEEQ.

The protein belongs to the RbfA family. Monomer. Binds 30S ribosomal subunits, but not 50S ribosomal subunits or 70S ribosomes.

It is found in the cytoplasm. In terms of biological role, one of several proteins that assist in the late maturation steps of the functional core of the 30S ribosomal subunit. Associates with free 30S ribosomal subunits (but not with 30S subunits that are part of 70S ribosomes or polysomes). Required for efficient processing of 16S rRNA. May interact with the 5'-terminal helix region of 16S rRNA. This Bradyrhizobium diazoefficiens (strain JCM 10833 / BCRC 13528 / IAM 13628 / NBRC 14792 / USDA 110) protein is Ribosome-binding factor A.